The following is a 500-amino-acid chain: Probable cytosol aminopeptidase (500 aa).

Residues K264 and D269 each contribute to the Mn(2+) site. K276 is a catalytic residue. The Mn(2+) site is built by D287, D346, and E348. R350 is a catalytic residue.

This sequence belongs to the peptidase M17 family. Mn(2+) serves as cofactor.

It localises to the cytoplasm. It catalyses the reaction Release of an N-terminal amino acid, Xaa-|-Yaa-, in which Xaa is preferably Leu, but may be other amino acids including Pro although not Arg or Lys, and Yaa may be Pro. Amino acid amides and methyl esters are also readily hydrolyzed, but rates on arylamides are exceedingly low.. The enzyme catalyses Release of an N-terminal amino acid, preferentially leucine, but not glutamic or aspartic acids.. Its function is as follows. Presumably involved in the processing and regular turnover of intracellular proteins. Catalyzes the removal of unsubstituted N-terminal amino acids from various peptides. This chain is Probable cytosol aminopeptidase, found in Chlamydia felis (strain Fe/C-56) (Chlamydophila felis).